The chain runs to 64 residues: Relaxin (64 aa).

3 cysteine pairs are disulfide-bonded: Cys11/Cys51, Cys23/Cys64, and Cys50/Cys55.

This sequence belongs to the insulin family. In terms of assembly, heterodimer of a B chain and an A chain linked by two disulfide bonds.

Its subcellular location is the secreted. The polypeptide is Relaxin (Leucoraja erinaceus (Little skate)).